The following is a 156-amino-acid chain: Small ribosomal subunit protein uS7 (156 aa).

This sequence belongs to the universal ribosomal protein uS7 family. In terms of assembly, part of the 30S ribosomal subunit. Contacts proteins S9 and S11.

One of the primary rRNA binding proteins, it binds directly to 16S rRNA where it nucleates assembly of the head domain of the 30S subunit. Is located at the subunit interface close to the decoding center, probably blocks exit of the E-site tRNA. The chain is Small ribosomal subunit protein uS7 from Natranaerobius thermophilus (strain ATCC BAA-1301 / DSM 18059 / JW/NM-WN-LF).